Here is a 490-residue protein sequence, read N- to C-terminus: ATP synthase subunit beta, chloroplastic (490 aa).

Gly-170–Thr-177 is a binding site for ATP.

This sequence belongs to the ATPase alpha/beta chains family. In terms of assembly, F-type ATPases have 2 components, CF(1) - the catalytic core - and CF(0) - the membrane proton channel. CF(1) has five subunits: alpha(3), beta(3), gamma(1), delta(1), epsilon(1). CF(0) has four main subunits: a(1), b(1), b'(1) and c(9-12).

The protein resides in the plastid. It localises to the chloroplast thylakoid membrane. It carries out the reaction ATP + H2O + 4 H(+)(in) = ADP + phosphate + 5 H(+)(out). Functionally, produces ATP from ADP in the presence of a proton gradient across the membrane. The catalytic sites are hosted primarily by the beta subunits. This chain is ATP synthase subunit beta, chloroplastic, found in Cressa truxillensis (Spreading alkaliweed).